The sequence spans 117 residues: Non-specific lipid-transfer protein 3 (117 aa).

Positions Met1–Ala25 are cleaved as a signal peptide. 4 disulfides stabilise this stretch: Cys29–Cys76, Cys39–Cys53, Cys54–Cys99, and Cys74–Cys113.

This sequence belongs to the plant LTP family.

Its function is as follows. Plant non-specific lipid-transfer proteins transfer phospholipids as well as galactolipids across membranes. May play a role in wax or cutin deposition in the cell walls of expanding epidermal cells and certain secretory tissues. The sequence is that of Non-specific lipid-transfer protein 3 (LTP3) from Brassica napus (Rape).